The primary structure comprises 27 residues: Larval-specific very high density lipoprotein (27 aa).

As to quaternary structure, homodimer. Hemolymph.

It localises to the secreted. The protein resides in the extracellular space. Unknown (it might play a role in lipid transport and/or storage protein metabolism during metamorphosis). The sequence is that of Larval-specific very high density lipoprotein from Apis mellifera (Honeybee).